A 363-amino-acid polypeptide reads, in one-letter code: 5-hydroxytryptamine receptor 1E (363 aa).

Residues 1 to 21 (MNITNCTTEASMAIRPKTITE) are Extracellular-facing. N-linked (GlcNAc...) asparagine glycosylation is found at Asn-2 and Asn-5. Residues 22-45 (KMLICMTLVVITTLTTLLNLAVIM) form a helical membrane-spanning segment. At 46-59 (AIGTTKKLHQPANY) the chain is on the cytoplasmic side. The helical transmembrane segment at 60-84 (LICSLAVTDLLVAVLVMPLSIIYIV) threads the bilayer. At 85–92 (MDRWKLGY) the chain is on the extracellular side. The helical transmembrane segment at 93–118 (FLCEVWLSVDMTCCTCSILHLCVIAL) threads the bilayer. Cys-95 and Cys-173 are oxidised to a cystine. 2 residues coordinate serotonin: Asp-102 and Cys-106. A DRY motif; important for ligand-induced conformation changes motif is present at residues 119–121 (DRY). The Cytoplasmic segment spans residues 119 to 138 (DRYWAITNAIEYARKRTAKR). The helical transmembrane segment at 139-157 (AALMILTVWTISIFISMPP) threads the bilayer. Residues 158–179 (LFWRSHRRLSPPPSQCTIQHDH) lie on the Extracellular side of the membrane. Residues 180–203 (VIYTIYSTLGAFYIPLTLILILYY) form a helical membrane-spanning segment. Residues 204–291 (RIYHAAKSLY…SSTRERKAAR (88 aa)) are Cytoplasmic-facing. A helical transmembrane segment spans residues 292–316 (ILGLILGAFILSWLPFFIKELIVGL). Over 317-322 (SIYTVS) the chain is Extracellular. A helical transmembrane segment spans residues 323-345 (SEVADFLTWLGYVNSLINPLLYT). Residues 340 to 344 (NPLLY) carry the NPxxY motif; important for ligand-induced conformation changes and signaling motif. The Cytoplasmic segment spans residues 346–363 (SFNEDFKLAFKKLIRCRE).

The protein belongs to the G-protein coupled receptor 1 family.

The protein localises to the cell membrane. Its function is as follows. G-protein coupled receptor for 5-hydroxytryptamine (serotonin). Also functions as a receptor for various alkaloids and psychoactive substances. Ligand binding causes a conformation change that triggers signaling via guanine nucleotide-binding proteins (G proteins) and modulates the activity of downstream effectors, such as adenylate cyclase. HTR1E is coupled to G(i)/G(o) G alpha proteins and mediates inhibitory neurotransmission by inhibiting adenylate cyclase activity. The protein is 5-hydroxytryptamine receptor 1E (HTR1E) of Pan troglodytes (Chimpanzee).